The primary structure comprises 95 residues: Probable FAD-linked sulfhydryl oxidase OPG072 (95 aa).

Residues 1 to 8 lie on the Intravirion side of the membrane; it reads MNPKHWGR. In terms of domain architecture, ERV/ALR sulfhydryl oxidase spans 1–95; the sequence is MNPKHWGRAV…AIDVSKVKPL (95 aa). The helical transmembrane segment at 9 to 25 threads the bilayer; it reads AVWTIIFIVLSQAGLDG. At 26 to 95 the chain is on the virion surface side; the sequence is NIEACKRKLY…AIDVSKVKPL (70 aa). C43 and C46 form a disulfide bridge.

The protein belongs to the orthopoxvirus OPG072 family. Interacts with OPG128; this interaction involves formation of a transient disulfide-bonded intermediate, allowing disulfide bond transfer. Requires FAD as cofactor.

It localises to the virion membrane. The protein localises to the host cytoplasm. It catalyses the reaction 2 R'C(R)SH + O2 = R'C(R)S-S(R)CR' + H2O2. FAD-dependent sulfhydryl oxidase that catalyzes disulfide bond formation. The complete pathway for formation of disulfide bonds in intracellular virion membrane proteins sequentially involves thiol-disulfide transfer between OPG072, OPG128 and OPG088. The polypeptide is Probable FAD-linked sulfhydryl oxidase OPG072 (OPG072) (Monkeypox virus).